The primary structure comprises 432 residues: Serine hydroxymethyltransferase (432 aa).

(6S)-5,6,7,8-tetrahydrofolate is bound by residues Leu-131 and 135–137; that span reads GHL. Position 240 is an N6-(pyridoxal phosphate)lysine (Lys-240).

This sequence belongs to the SHMT family. In terms of assembly, homodimer. Requires pyridoxal 5'-phosphate as cofactor.

The protein localises to the cytoplasm. The enzyme catalyses (6R)-5,10-methylene-5,6,7,8-tetrahydrofolate + glycine + H2O = (6S)-5,6,7,8-tetrahydrofolate + L-serine. Its pathway is one-carbon metabolism; tetrahydrofolate interconversion. It participates in amino-acid biosynthesis; glycine biosynthesis; glycine from L-serine: step 1/1. Its function is as follows. Catalyzes the reversible interconversion of serine and glycine with tetrahydrofolate (THF) serving as the one-carbon carrier. This reaction serves as the major source of one-carbon groups required for the biosynthesis of purines, thymidylate, methionine, and other important biomolecules. Also exhibits THF-independent aldolase activity toward beta-hydroxyamino acids, producing glycine and aldehydes, via a retro-aldol mechanism. The protein is Serine hydroxymethyltransferase of Acidiphilium cryptum (strain JF-5).